A 74-amino-acid chain; its full sequence is Ubiquitin-like protein FUBI (74 aa).

This sequence belongs to the ubiquitin family.

This is Ubiquitin-like protein FUBI (FAU) from Bos taurus (Bovine).